A 168-amino-acid chain; its full sequence is NADH-quinone oxidoreductase subunit I (168 aa).

2 consecutive 4Fe-4S ferredoxin-type domains span residues 58-88 and 99-128; these read LRRY…IEAG and VRYD…EGPN. Positions 68, 71, 74, 78, 108, 111, 114, and 118 each coordinate [4Fe-4S] cluster.

It belongs to the complex I 23 kDa subunit family. In terms of assembly, NDH-1 is composed of 14 different subunits. Subunits NuoA, H, J, K, L, M, N constitute the membrane sector of the complex. Requires [4Fe-4S] cluster as cofactor.

It is found in the cell inner membrane. It catalyses the reaction a quinone + NADH + 5 H(+)(in) = a quinol + NAD(+) + 4 H(+)(out). NDH-1 shuttles electrons from NADH, via FMN and iron-sulfur (Fe-S) centers, to quinones in the respiratory chain. The immediate electron acceptor for the enzyme in this species is believed to be ubiquinone. Couples the redox reaction to proton translocation (for every two electrons transferred, four hydrogen ions are translocated across the cytoplasmic membrane), and thus conserves the redox energy in a proton gradient. This chain is NADH-quinone oxidoreductase subunit I, found in Bradyrhizobium diazoefficiens (strain JCM 10833 / BCRC 13528 / IAM 13628 / NBRC 14792 / USDA 110).